Consider the following 212-residue polypeptide: Casparian strip membrane protein 1 (212 aa).

The interval methionine 1–proline 28 is disordered. Topologically, residues methionine 1–arginine 49 are cytoplasmic. A compositionally biased stretch (low complexity) spans proline 16 to proline 28. The chain crosses the membrane as a helical span at residues glycine 50 to alanine 70. The Extracellular portion of the chain corresponds to threonine 71 to threonine 100. A helical membrane pass occupies residues phenylalanine 101–isoleucine 121. At leucine 122–arginine 133 the chain is on the cytoplasmic side. A helical membrane pass occupies residues leucine 134–alanine 154. Residues alanine 155 to glycine 186 are Extracellular-facing. The helical transmembrane segment at alanine 187–valine 207 threads the bilayer. Over alanine 208–lysine 212 the chain is Cytoplasmic.

The protein belongs to the Casparian strip membrane proteins (CASP) family. In terms of assembly, homodimer and heterodimers.

The protein resides in the cell membrane. In terms of biological role, regulates membrane-cell wall junctions and localized cell wall deposition. Required for establishment of the Casparian strip membrane domain (CSD) and the subsequent formation of Casparian strips, a cell wall modification of the root endodermis that determines an apoplastic barrier between the intraorganismal apoplasm and the extraorganismal apoplasm and prevents lateral diffusion. This is Casparian strip membrane protein 1 from Helianthus annuus (Common sunflower).